The sequence spans 650 residues: MAELVGPLRKQLADSLSSCRVLVVGAGGIGCELLKNLVLTGFKNIEVIDLDTIDVSNLNRQFLFQKKHVGKSKAQVAKESVLRFCPSANITAYHDSIMNPDYNVEFFRNFQLVMNALDNRAARNHVNRMCLAADIPLIESGTAGYLGQVTVIKKGQTECYECQPKPTQKTFPGCTIRNTPSEPIHCIVWAKYLFNQLFGEEDADQEVSPDTADPEAAWNPADAAARATASDQDGDIKRVSTKEWARSTGYDPIKLFNKVSALSQTSPYLFKDDIMYLLTMDKLWKKRKAPLPLEWEEINQLGSQEQVIGSGLKDQQVLGVQGYAQLFQHSVETLRSQLKEKGDGAELVWDKDDPPAMDFVTAASNLRMNVFSMNMKSRFDVKSMAGNIIPAIATTNAVIAGLIVLEALKILNSDFEQCRTIFLNKQPNPRKKLLVPCALDPPNASCYVCASKPEVTVKLNVHKTMVQALQDKILKEKFGMVAPDVQIEDGKGTILISSEEGETEANNNKFLSDFGIRNGSRLQADDFLQDYTLLVNVIHSEELEKDVEFEVVGDAPDKAPAPSAPEEGKNIANGNKDSAQPSTSSKAAVEDDDVLLVDSDEEPSSSTMDTESSNRKRKHHDAETDDASSKRKRLDQQPADDDDEDIIALD.

ATP-binding positions include 25–30, Asp49, 57–60, Lys73, 96–97, and 118–123; these read GAGGIG, NLNR, SI, and DNRAAR. Positions 159 and 162 each coordinate Zn(2+). Cys174 functions as the Glycyl thioester intermediate in the catalytic mechanism. Residue Lys191 forms a Glycyl lysine isopeptide (Lys-Gly) (interchain with G-Cter in SUMO) linkage. A Glycyl lysine isopeptide (Lys-Gly) (interchain with G-Cter in SUMO1) cross-link involves residue Lys237. Residues Lys258, Lys282, and Lys286 each participate in a glycyl lysine isopeptide (Lys-Gly) (interchain with G-Cter in SUMO) cross-link. Positions 446 and 449 each coordinate Zn(2+). Residues 554-650 are disordered; the sequence is DAPDKAPAPS…DDDEDIIALD (97 aa). Positions 572 to 586 are enriched in polar residues; sequence ANGNKDSAQPSTSSK. The segment covering 590–603 has biased composition (acidic residues); that stretch reads EDDDVLLVDSDEEP. The residue at position 599 (Ser599) is a Phosphoserine. Residues Lys618 and Lys630 each participate in a glycyl lysine isopeptide (Lys-Gly) (interchain with G-Cter in SUMO) cross-link. Over residues 638-650 the composition is skewed to acidic residues; the sequence is PADDDDEDIIALD.

The protein belongs to the ubiquitin-activating E1 family. In terms of assembly, heterodimer of sae1 and uba2/sae2. The heterodimer corresponds to the two domains that are encoded on a single polypeptide chain in ubiquitin-activating enzyme E1. Interacts with ube2i. In terms of processing, sumoylated with SUMO1 and SUMO2/3 and by UBC9. Sumoylation at Lys-237 inhibits enzymatic activity. Sumoylation at the C-terminal lysine cluster plays an essential role in nuclear trafficking. As to expression, expressed in eye, brain and pectoral fins.

The protein resides in the cytoplasm. The protein localises to the nucleus. The protein operates within protein modification; protein sumoylation. The heterodimer acts as an E1 ligase for sumo1, sumo2, and sumo3. It mediates ATP-dependent activation of sumo proteins followed by formation of a thioester bond between a sumo protein and a conserved active site cysteine residue on uba2/sae2. In Danio rerio (Zebrafish), this protein is SUMO-activating enzyme subunit 2 (uba2).